Reading from the N-terminus, the 286-residue chain is uncharacterized protein (286 aa).

Residues 36–256 (ENPQHHPSIE…IKGCLLVQLK (221 aa)) form the Radical SAM core domain. 3 residues coordinate [4Fe-4S] cluster: C50, C54, and C57.

[4Fe-4S] cluster serves as cofactor.

This is an uncharacterized protein from Methanocaldococcus jannaschii (strain ATCC 43067 / DSM 2661 / JAL-1 / JCM 10045 / NBRC 100440) (Methanococcus jannaschii).